The following is a 440-amino-acid chain: Tol-Pal system protein TolB (440 aa).

Positions 1–21 are cleaved as a signal peptide; the sequence is MKIFGKWLLVTLLICSMPVKA.

This sequence belongs to the TolB family. In terms of assembly, the Tol-Pal system is composed of five core proteins: the inner membrane proteins TolA, TolQ and TolR, the periplasmic protein TolB and the outer membrane protein Pal. They form a network linking the inner and outer membranes and the peptidoglycan layer.

Its subcellular location is the periplasm. Part of the Tol-Pal system, which plays a role in outer membrane invagination during cell division and is important for maintaining outer membrane integrity. The protein is Tol-Pal system protein TolB of Shewanella halifaxensis (strain HAW-EB4).